Reading from the N-terminus, the 457-residue chain is Nuclear distribution protein PAC1 (457 aa).

Residues 73-106 (SSIVRLQRRIIELEKEIQELTDENENLRENGPSS) are a coiled coil. 7 WD repeats span residues 126-165 (SAGA…MPVA), 169-211 (AHMR…LQLI), 216-257 (GHEH…CLKS), 260-299 (PHTE…SFGT), 322-362 (SHRF…FVAH), 382-419 (GHSS…VVRS), and 423-457 (LHSG…ILMK).

It belongs to the WD repeat LIS1/nudF family. Self-associates. Interacts with NDL1 and dynein.

Its subcellular location is the cytoplasm. The protein resides in the cytoskeleton. It is found in the spindle pole. In terms of biological role, positively regulates the activity of the minus-end directed microtubule motor protein dynein. Plays a central role in positioning the mitotic spindle at the bud neck during cell division. Targets cytoplasmic dynein to microtubule plus ends, thereby promoting dynein-mediated microtubule sliding along the bud cortex and consequently the movement of the mitotic spindle to the bud neck. The protein is Nuclear distribution protein PAC1 of Lachancea thermotolerans (strain ATCC 56472 / CBS 6340 / NRRL Y-8284) (Yeast).